Reading from the N-terminus, the 322-residue chain is Beta-ketoacyl-[acyl-carrier-protein] synthase III (322 aa).

Active-site residues include Cys113 and His249. Residues 250 to 254 (QANIR) form an ACP-binding region. Asn279 is a catalytic residue.

It belongs to the thiolase-like superfamily. FabH family. As to quaternary structure, homodimer.

Its subcellular location is the cytoplasm. The enzyme catalyses malonyl-[ACP] + acetyl-CoA + H(+) = 3-oxobutanoyl-[ACP] + CO2 + CoA. The protein operates within lipid metabolism; fatty acid biosynthesis. Its function is as follows. Catalyzes the condensation reaction of fatty acid synthesis by the addition to an acyl acceptor of two carbons from malonyl-ACP. Catalyzes the first condensation reaction which initiates fatty acid synthesis and may therefore play a role in governing the total rate of fatty acid production. Possesses both acetoacetyl-ACP synthase and acetyl transacylase activities. Its substrate specificity determines the biosynthesis of branched-chain and/or straight-chain of fatty acids. The polypeptide is Beta-ketoacyl-[acyl-carrier-protein] synthase III (Thioalkalivibrio sulfidiphilus (strain HL-EbGR7)).